The sequence spans 458 residues: Elongation factor 1-alpha (458 aa).

The residue at position 2 (Gly-2) is a N,N,N-trimethylglycine. Lys-3 carries the N6,N6-dimethyllysine; alternate modification. Lys-3 carries the N6-methyllysine; alternate modification. Residues Lys-5–Ser-240 enclose the tr-type G domain. The tract at residues Gly-14 to Ser-21 is G1. Gly-14–Ser-21 is a GTP binding site. Lys-30 is subject to N6-methyllysine. The tract at residues Gly-70 to Asp-74 is G2. Lys-79 is modified (N6,N6,N6-trimethyllysine). The interval Asp-91–Gly-94 is G3. Residues Asp-91 to His-95 and Asn-153 to Asp-156 each bind GTP. The tract at residues Asn-153–Asp-156 is G4. The tract at residues Ser-192–Trp-194 is G5. An N6,N6-dimethyllysine; alternate modification is found at Lys-316. Lys-316 is modified (N6-methyllysine; alternate). At Lys-390 the chain carries N6-methyllysine.

This sequence belongs to the TRAFAC class translation factor GTPase superfamily. Classic translation factor GTPase family. EF-Tu/EF-1A subfamily.

It localises to the cytoplasm. Its function is as follows. This protein promotes the GTP-dependent binding of aminoacyl-tRNA to the A-site of ribosomes during protein biosynthesis. This is Elongation factor 1-alpha (TEF-2) from Mucor circinelloides f. lusitanicus (Mucor racemosus var. lusitanicus).